The following is a 103-amino-acid chain: Large ribosomal subunit protein uL24 (103 aa).

This sequence belongs to the universal ribosomal protein uL24 family. In terms of assembly, part of the 50S ribosomal subunit.

Its function is as follows. One of two assembly initiator proteins, it binds directly to the 5'-end of the 23S rRNA, where it nucleates assembly of the 50S subunit. Functionally, one of the proteins that surrounds the polypeptide exit tunnel on the outside of the subunit. This Bacillus mycoides (strain KBAB4) (Bacillus weihenstephanensis) protein is Large ribosomal subunit protein uL24.